Reading from the N-terminus, the 181-residue chain is Avenin-like a6 (181 aa).

The N-terminal stretch at 1–19 (MKNLFILALLAFTATSAVA) is a signal peptide.

Belongs to the prolamin family. Contains 7 disulfide bonds.

Its function is as follows. Seed storage protein. Not integrated in the gluten polymer through disulfide bonds, unless incorporated by reduction and reoxidation during dough making. Increases dough strength and bread volume, but decreases dough stability when added into a base wheat flour. The sequence is that of Avenin-like a6 from Triticum aestivum (Wheat).